Here is a 301-residue protein sequence, read N- to C-terminus: RNA polymerase II holoenzyme cyclin-like subunit (301 aa).

Positions 53–142 constitute a Cyclin N-terminal domain; the sequence is QQLIKLGKRM…LGECEFALIS (90 aa).

Belongs to the cyclin family. Cyclin C subfamily. Component of the srb8-11 complex, a regulatory module of the Mediator complex.

The protein localises to the nucleus. Its function is as follows. Component of the srb8-11 complex. The srb8-11 complex is a regulatory module of the Mediator complex which is itself involved in regulation of basal and activated RNA polymerase II-dependent transcription. The srb8-11 complex may be involved in the transcriptional repression of a subset of genes regulated by Mediator. It may inhibit the association of the Mediator complex with RNA polymerase II to form the holoenzyme complex. The srb8-11 complex phosphorylates the C-terminal domain (CTD) of the largest subunit of RNA polymerase II. This chain is RNA polymerase II holoenzyme cyclin-like subunit (ssn8), found in Aspergillus oryzae (strain ATCC 42149 / RIB 40) (Yellow koji mold).